Reading from the N-terminus, the 443-residue chain is Eukaryotic translation initiation factor 5 (443 aa).

29 to 36 (GRGNGIKT) contacts GTP. The span at 147 to 178 (PEVKKGSKDKKAMRRAEKERLKEGEAADEELK) shows a compositional bias: basic and acidic residues. 2 disordered regions span residues 147–244 (PEVK…LTDT) and 271–293 (EPEKKKKAASNQNGGSQNGNSKN). Residues 179–188 (KVKKEVKKKG) are compositionally biased toward basic residues. The span at 207 to 227 (SGSDEDRRSPTHKQIEEKEEA) shows a compositional bias: basic and acidic residues. Residues 228–237 (KDEDDDDDDG) are compositionally biased toward acidic residues. A compositionally biased stretch (low complexity) spans 280 to 291 (SNQNGGSQNGNS). Positions 284–443 (GGSQNGNSKN…QNAESESDEE (160 aa)) constitute a W2 domain.

It belongs to the eIF-2-beta/eIF-5 family.

In terms of biological role, catalyzes the hydrolysis of GTP bound to the 40S ribosomal initiation complex (40S.mRNA.Met-tRNA[F].eIF-2.GTP) with the subsequent joining of a 60S ribosomal subunit resulting in the release of eIF-2 and the guanine nucleotide. The subsequent joining of a 60S ribosomal subunit results in the formation of a functional 80S initiation complex (80S.mRNA.Met-tRNA[F]). This is Eukaryotic translation initiation factor 5 (EIF5) from Phaseolus vulgaris (Kidney bean).